The chain runs to 473 residues: Ribulose bisphosphate carboxylase large chain (473 aa).

The propeptide occupies 1–2 (MS). Pro3 is subject to N-acetylproline. Lys14 is subject to N6,N6,N6-trimethyllysine. The substrate site is built by Asn123 and Thr173. Lys175 serves as the catalytic Proton acceptor. Lys177 is a substrate binding site. Mg(2+)-binding residues include Lys201, Asp203, and Glu204. Lys201 carries the N6-carboxylysine modification. The active-site Proton acceptor is His294. The substrate site is built by Arg295, His327, and Ser379.

This sequence belongs to the RuBisCO large chain family. Type I subfamily. As to quaternary structure, heterohexadecamer of 8 large chains and 8 small chains; disulfide-linked. The disulfide link is formed within the large subunit homodimers. Requires Mg(2+) as cofactor. In terms of processing, the disulfide bond which can form in the large chain dimeric partners within the hexadecamer appears to be associated with oxidative stress and protein turnover.

It is found in the plastid. Its subcellular location is the chloroplast. It catalyses the reaction 2 (2R)-3-phosphoglycerate + 2 H(+) = D-ribulose 1,5-bisphosphate + CO2 + H2O. The catalysed reaction is D-ribulose 1,5-bisphosphate + O2 = 2-phosphoglycolate + (2R)-3-phosphoglycerate + 2 H(+). In terms of biological role, ruBisCO catalyzes two reactions: the carboxylation of D-ribulose 1,5-bisphosphate, the primary event in carbon dioxide fixation, as well as the oxidative fragmentation of the pentose substrate in the photorespiration process. Both reactions occur simultaneously and in competition at the same active site. This is Ribulose bisphosphate carboxylase large chain from Vigna unguiculata (Cowpea).